The primary structure comprises 196 residues: Probable malonic semialdehyde reductase RutE (196 aa).

This sequence belongs to the nitroreductase family. HadB/RutE subfamily. FMN serves as cofactor.

It catalyses the reaction 3-hydroxypropanoate + NADP(+) = 3-oxopropanoate + NADPH + H(+). May reduce toxic product malonic semialdehyde to 3-hydroxypropionic acid, which is excreted. This chain is Probable malonic semialdehyde reductase RutE, found in Shigella flexneri serotype 5b (strain 8401).